Consider the following 162-residue polypeptide: Endoribonuclease YbeY (162 aa).

Residues histidine 118, histidine 122, and histidine 128 each contribute to the Zn(2+) site.

The protein belongs to the endoribonuclease YbeY family. It depends on Zn(2+) as a cofactor.

It is found in the cytoplasm. Functionally, single strand-specific metallo-endoribonuclease involved in late-stage 70S ribosome quality control and in maturation of the 3' terminus of the 16S rRNA. In Caulobacter sp. (strain K31), this protein is Endoribonuclease YbeY.